A 668-amino-acid polypeptide reads, in one-letter code: DNA ligase (668 aa).

NAD(+)-binding positions include 31 to 35, 80 to 81, and Glu111; these read DYDFD and SL. Catalysis depends on Lys113, which acts as the N6-AMP-lysine intermediate. Residues Arg134, Glu170, Lys285, and Lys309 each contribute to the NAD(+) site. 4 residues coordinate Zn(2+): Cys403, Cys406, Cys421, and Cys427. Residues 587-668 form the BRCT domain; it reads NATEKFIGKT…EFITKLNESE (82 aa).

This sequence belongs to the NAD-dependent DNA ligase family. LigA subfamily. The cofactor is Mg(2+). It depends on Mn(2+) as a cofactor.

The enzyme catalyses NAD(+) + (deoxyribonucleotide)n-3'-hydroxyl + 5'-phospho-(deoxyribonucleotide)m = (deoxyribonucleotide)n+m + AMP + beta-nicotinamide D-nucleotide.. DNA ligase that catalyzes the formation of phosphodiester linkages between 5'-phosphoryl and 3'-hydroxyl groups in double-stranded DNA using NAD as a coenzyme and as the energy source for the reaction. It is essential for DNA replication and repair of damaged DNA. The sequence is that of DNA ligase from Flavobacterium johnsoniae (strain ATCC 17061 / DSM 2064 / JCM 8514 / BCRC 14874 / CCUG 350202 / NBRC 14942 / NCIMB 11054 / UW101) (Cytophaga johnsonae).